Reading from the N-terminus, the 354-residue chain is MGEQPIFSTRAHVFQIDPNTKKNWVPTSKHAVTVSYFYDSTRNVYRIISLDGSKAIINSTITPNMTFTKTSQKFGQWADSRANTVYGLGFSSEHHLSKFAEKFQEFKEAARLAKEKSQEKMELTSTPSQESAGGDLQSPLTPESINGTDDERTPDVTQNSEPRAEPTQNALPFSHSSAISKHWEAELATLKGNNAKLTAALLESTANVKQWKQQLAAYQEEAERLHKRVTELECVSSQANAVHTHKTELNQTIQELEETLKLKEEEIERLKQEIDNARELQEQRDSLTQKLQEVEIRNKDLEGQLSDLEQRLEKSQNEQEAFRNNLKTLLEILDGKIFELTELRDNLAKLLECS.

In terms of domain architecture, WH1 spans 1 to 110 (MGEQPIFSTR…EKFQEFKEAA (110 aa)). At glycine 2 the chain carries N-acetylglycine. Positions 114–173 (KEKSQEKMELTSTPSQESAGGDLQSPLTPESINGTDDERTPDVTQNSEPRAEPTQNALPF) are disordered. Polar residues-rich tracts occupy residues 138–147 (SPLTPESING) and 155–173 (DVTQNSEPRAEPTQNALPF). The stretch at 181 to 352 (KHWEAELATL…LRDNLAKLLE (172 aa)) forms a coiled coil. The required for tetramerization stretch occupies residues 290-354 (KLQEVEIRNK…DNLAKLLECS (65 aa)). The residue at position 306 (serine 306) is a Phosphoserine.

It belongs to the Homer family. In terms of assembly, tetramer; this tetrameric structure is critical for forming the high-order complex with SHANK1, which in turn is necessary for the structural and functional integrity of dendritic spines. Interacts with GRM1, GRM5, ITPR1, DNM3, RYR1, RYR2 and SHANK3. Interacts with IFT57 and OPHN1. Isoform 1 encodes a coiled-coil structure that mediates homo- and heteromultimerization. Interacts with SHANK1; forms high-order polymerized complex with a mesh-like network structure, at least composed of SHANK1, HOMER1 and DLGAP1; the complex formation is SHANK1 multimerization dependent. Interacts with NFATC4. Interacts with DAGLA (via PPXXF motif); this interaction is required for the cell membrane localization of DAGLA. Interacts with SRGAP2.

Its subcellular location is the cytoplasm. The protein localises to the postsynaptic density. The protein resides in the synapse. It localises to the cell projection. It is found in the dendritic spine. In terms of biological role, postsynaptic density scaffolding protein. Binds and cross-links cytoplasmic regions of GRM1, GRM5, ITPR1, DNM3, RYR1, RYR2, SHANK1 and SHANK3. By physically linking GRM1 and GRM5 with ER-associated ITPR1 receptors, it aids the coupling of surface receptors to intracellular calcium release. May also couple GRM1 to PI3 kinase through its interaction with AGAP2. Isoform 1 regulates the trafficking and surface expression of GRM5. Isoform 3 acts as a natural dominant negative, in dynamic competition with constitutively expressed isoform 1 to regulate synaptic metabotropic glutamate function. Isoform 3, may be involved in the structural changes that occur at synapses during long-lasting neuronal plasticity and development. Forms a high-order complex with SHANK1, which in turn is necessary for the structural and functional integrity of dendritic spines. Negatively regulates T cell activation by inhibiting the calcineurin-NFAT pathway. Acts by competing with calcineurin/PPP3CA for NFAT protein binding, hence preventing NFAT activation by PPP3CA. The protein is Homer protein homolog 1 of Homo sapiens (Human).